The following is a 386-amino-acid chain: uncharacterized protein (386 aa).

The next 2 helical transmembrane spans lie at A54 to A74 and L347 to G367.

It to M.tuberculosis Rv0628c.

The protein localises to the cell membrane. This is an uncharacterized protein from Mycobacterium tuberculosis (strain CDC 1551 / Oshkosh).